A 248-amino-acid chain; its full sequence is Probable phosphatase VFMJ11_A0899 (248 aa).

Zn(2+) contacts are provided by His8, His10, His16, His41, Glu74, His101, His131, Asp193, and His195.

The protein belongs to the PHP family. Zn(2+) is required as a cofactor.

The polypeptide is Probable phosphatase VFMJ11_A0899 (Aliivibrio fischeri (strain MJ11) (Vibrio fischeri)).